We begin with the raw amino-acid sequence, 166 residues long: UPF0303 protein Avin_29320 (166 aa).

This sequence belongs to the UPF0303 family.

This chain is UPF0303 protein Avin_29320, found in Azotobacter vinelandii (strain DJ / ATCC BAA-1303).